We begin with the raw amino-acid sequence, 166 residues long: Ribosome maturation factor RimM (166 aa).

The 73-residue stretch at glutamate 92–leucine 164 folds into the PRC barrel domain.

This sequence belongs to the RimM family. In terms of assembly, binds ribosomal protein uS19.

It is found in the cytoplasm. An accessory protein needed during the final step in the assembly of 30S ribosomal subunit, possibly for assembly of the head region. Essential for efficient processing of 16S rRNA. May be needed both before and after RbfA during the maturation of 16S rRNA. It has affinity for free ribosomal 30S subunits but not for 70S ribosomes. The polypeptide is Ribosome maturation factor RimM (Dehalococcoides mccartyi (strain CBDB1)).